A 411-amino-acid polypeptide reads, in one-letter code: Protrudin (411 aa).

The interval 1–27 is disordered; sequence MQTSEREGSGPELSPSVMPEAPLESPP. The Cytoplasmic portion of the chain corresponds to 1–66; that stretch reads MQTSEREGSG…AGDGVRYLLR (66 aa). Positions 1-92 are sufficient for homooligomerization; sequence MQTSEREGSG…LFLTLNEGAW (92 aa). Residues 1–205 form a sufficient for localization to endoplasmic reticulum tubular network and for interactions with REEP1, REEP5, ATL1, ATL2, ATL3 and SPAST region; sequence MQTSEREGSG…LYLLPLCWVL (205 aa). The interval 51–64 is necessary for interaction with RAB11A and function in neurite outgrowth; sequence LEPLKDAGDGVRYL. Residues 67 to 87 form a helical membrane-spanning segment; that stretch reads WQMPLCSLLTCLGLNVLFLTL. A topological domain (lumenal) is located at residue Asn-88. The chain crosses the membrane as a helical span at residues 89 to 109; the sequence is EGAWYSVGALMISVPALLGYL. Residues 110 to 187 are Cytoplasmic-facing; that stretch reads QEVCRARLPE…NPVVSSQFYG (78 aa). Residues 188–208 constitute an intramembrane region (helical); the sequence is ALLGTICMLYLLPLCWVLTLL. The Cytoplasmic portion of the chain corresponds to 209-411; sequence NSTLFLGNVE…CASCNQTLSK (203 aa). The tract at residues 234-286 is disordered; it reads MNPKQEEHAFESPPPPDVGGKGGLMDSTPALTPTEDLTPGSVEEAEEAEPDEE. Residues 271–361 are necessary for interaction with KIF5A; it reads TPGSVEEAEE…GCSATFSVLK (91 aa). The segment covering 276-286 has biased composition (acidic residues); the sequence is EEAEEAEPDEE. The necessary for interaction with VAPA stretch occupies residues 286–292; sequence EFKDAIE. The FYVE-type zinc-finger motif lies at 344–410; sequence TNNFGNCTGC…VCASCNQTLS (67 aa). Residues Cys-350, Cys-353, Cys-366, Cys-369, Cys-374, Cys-377, Cys-402, and Cys-405 each contribute to the Zn(2+) site.

Can form homooligomers (monomers, dimers and tetramers). Interacts with RAB11A (GDP-bound form); regulates RAB11A. Interacts with FKBP8; may negatively regulate ZFYVE27 phosphorylation. Interacts with VAPA (via MSP domain); may regulate ZFYVE27 retention in the endoplasmic reticulum and its function in cell projections formation. Interacts with VAPB (via MSP domain). Interacts with RAB11B (GDP-bound form), REEP1, REEP5, ATL1, ATL2, ATL3, SPAST, SURF4, KIF5A, KIF5B, KIF5C and RTN3. In terms of processing, phosphorylated. Phosphorylation is induced by NGF through the MAPK/ERK pathway and modulates interaction with RAB11A.

Its subcellular location is the recycling endosome membrane. It is found in the endoplasmic reticulum membrane. It localises to the cell projection. The protein localises to the growth cone membrane. In terms of biological role, key regulator of RAB11-dependent vesicular trafficking during neurite extension through polarized membrane transport. Promotes axonal elongation and contributes to the establishment of neuronal cell polarity. Involved in nerve growth factor-induced neurite formation in VAPA-dependent manner. Contributes to both the formation and stabilization of the tubular ER network. Involved in ER morphogenesis by regulating the sheet-to-tubule balance and possibly the density of tubule interconnections. Acts as an adapter protein that facilitates the interaction of KIF5A with VAPA, VAPB, SURF4, RAB11A, RAB11B and RTN3 and the ZFYVE27-KIF5A complex contributes to the transport of these proteins in neurons. Can induce formation of neurite-like membrane protrusions in non-neuronal cells in a KIF5A/B-dependent manner. The chain is Protrudin (ZFYVE27) from Pongo abelii (Sumatran orangutan).